The primary structure comprises 163 residues: tRNA-acetylating toxin 2 (163 aa).

Acetyl-CoA is bound by residues leucine 89, valine 91, histidine 96, glycine 97, glutamine 98, glycine 99, alanine 101, arginine 102, and glutamate 132. Residue tyrosine 137 is part of the active site. Arginine 139 contacts acetyl-CoA.

This sequence belongs to the acetyltransferase family. GNAT subfamily. As to quaternary structure, homodimer (in absence of antitoxin). Forms a complex with cognate antitoxin TacA2. Forms a 4:2 antitoxin:toxin complex with cognate antitoxin TacA2.

It catalyses the reaction glycyl-tRNA(Gly) + acetyl-CoA = N-acetylglycyl-tRNA(Gly) + CoA + H(+). Functionally, toxic component of a type II toxin-antitoxin (TA) system. Acetylates tRNA and inhibits translation. Acetylates exclusively Gly in situ. Overexpression during the lag phase of a tacA2-tacT2 deletion strain leads to very small increase in persister cells in the presence of cefotaxime but no detectable growth phenotype in absence of antibiotics. Compared to a protein with a single amino acid change (TacT2 from S.enterica NCTC 13349, Glu-29 is Lys in NCTC 13349) this protein binds tRNA very poorly and acetylates tRNA very poorly. Persister cell formation is neutralized by cognate antitoxin TacA2. Neutralized only by cognate antitoxin TacA2 (A8), but not by TacA1 or TacA3. Plays a role in persister cell formation. The TacA2-TacT2 complex both represses and derepresses expression of its own operon. The protein is tRNA-acetylating toxin 2 of Salmonella typhimurium (strain 14028s / SGSC 2262).